We begin with the raw amino-acid sequence, 544 residues long: Zinc finger and SCAN domain-containing protein 25 (544 aa).

Residues K3 and K22 each participate in a glycyl lysine isopeptide (Lys-Gly) (interchain with G-Cter in SUMO2) cross-link. An SCAN box domain is found at 42 to 124 (RLRFRQFRYQ…AMVEDLTERA (83 aa)). K128 is covalently cross-linked (Glycyl lysine isopeptide (Lys-Gly) (interchain with G-Cter in SUMO2)). Positions 157 to 189 (VEVKPEWGMPPGEGVQGPDPGTEEQLSQDPGDE) are disordered. Residues K278 and K285 each participate in a glycyl lysine isopeptide (Lys-Gly) (interchain with G-Cter in SUMO2) cross-link. 6 C2H2-type zinc fingers span residues 348–370 (FQCPECGKGFSRSSNLVRHQRTH), 375–397 (YGCVECGKGFTLREYLMKHQRTH), 403–425 (YVCSECWKTFSQRHHLEVHQRSH), 431–453 (YKCGDCWKSFSRRQHLQVHRRTH), 459–480 (YTCECGKSFSRNANLAVHRRAH), and 486–508 (YGCQVCGKRFSKGERLVRHQRIH). The C2H2-type 7; degenerate zinc finger occupies 514–536 (YHCPACGRSFNQRSILNRHQKTQ).

Belongs to the krueppel C2H2-type zinc-finger protein family.

The protein resides in the nucleus. Functionally, may be involved in transcriptional regulation. This is Zinc finger and SCAN domain-containing protein 25 (ZSCAN25) from Homo sapiens (Human).